We begin with the raw amino-acid sequence, 141 residues long: Large ribosomal subunit protein uL11 (141 aa).

This sequence belongs to the universal ribosomal protein uL11 family. Part of the ribosomal stalk of the 50S ribosomal subunit. Interacts with L10 and the large rRNA to form the base of the stalk. L10 forms an elongated spine to which L12 dimers bind in a sequential fashion forming a multimeric L10(L12)X complex. In terms of processing, one or more lysine residues are methylated.

In terms of biological role, forms part of the ribosomal stalk which helps the ribosome interact with GTP-bound translation factors. This chain is Large ribosomal subunit protein uL11, found in Ruegeria pomeroyi (strain ATCC 700808 / DSM 15171 / DSS-3) (Silicibacter pomeroyi).